Consider the following 430-residue polypeptide: UDP-N-acetylglucosamine 1-carboxyvinyltransferase (430 aa).

Residue 22–23 (KN) coordinates phosphoenolpyruvate. Arg-102 serves as a coordination point for UDP-N-acetyl-alpha-D-glucosamine. Cys-126 serves as the catalytic Proton donor. Cys-126 bears the 2-(S-cysteinyl)pyruvic acid O-phosphothioketal mark. UDP-N-acetyl-alpha-D-glucosamine contacts are provided by residues 131 to 135 (RPVDL), 172 to 175 (KVSV), Asp-317, and Ile-339.

Belongs to the EPSP synthase family. MurA subfamily.

The protein localises to the cytoplasm. It carries out the reaction phosphoenolpyruvate + UDP-N-acetyl-alpha-D-glucosamine = UDP-N-acetyl-3-O-(1-carboxyvinyl)-alpha-D-glucosamine + phosphate. The protein operates within cell wall biogenesis; peptidoglycan biosynthesis. Its function is as follows. Cell wall formation. Adds enolpyruvyl to UDP-N-acetylglucosamine. The sequence is that of UDP-N-acetylglucosamine 1-carboxyvinyltransferase from Agrobacterium fabrum (strain C58 / ATCC 33970) (Agrobacterium tumefaciens (strain C58)).